The chain runs to 1640 residues: Basal body protein 10 (1640 aa).

The homodimerization stretch occupies residues 11 to 64 (VLRRKLEALGYSDPLEPASLQLVQKLVEDLVHTTDSYTAVKQQCAKQAQEIAAF). The stretch at 93–148 (AERHEREAREHYTAVKRLEDTIAELSYWKHAAAEKLASADKENAGLRKRCEELAKL) forms a coiled coil. The tract at residues 154-185 (SGAATPQSVAPKISSRSPIRVAPPPSPPRPRQ) is disordered. Residues 174 to 183 (VAPPPSPPRP) show a composition bias toward pro residues. 10 coiled-coil regions span residues 191-232 (LQAA…RDVE), 260-332 (ILQL…LQDT), 370-411 (VERL…AQSR), 461-722 (FAAL…AEAD), 758-960 (ARQM…AQAA), 1010-1030 (GEAL…LVRE), 1059-1086 (RASA…LAAE), 1129-1282 (INQY…LQAS), 1323-1494 (AKDQ…AERD), and 1523-1557 (AELA…TRAT). Positions 1592 to 1618 (GQGQVQGPAGTAPAAAAGAPGPQPGQA) are enriched in low complexity. Residues 1592–1640 (GQGQVQGPAGTAPAAAAGAPGPQPGQAQAGGFGGAHGGGSISLSGGPRR) form a disordered region. Residues 1619–1631 (QAGGFGGAHGGGS) show a composition bias toward gly residues.

The protein belongs to the CEP135/TSGA10 family. Homodimer.

It localises to the cytoplasm. The protein resides in the cytoskeleton. The protein localises to the microtubule organizing center. Its subcellular location is the centrosome. It is found in the centriole. Its function is as follows. Microtubule-binding protein essential for cytoskeletal organization (e.g. rootlet microtubule bundles) and flagellar basal body/centriole assembly. This chain is Basal body protein 10, found in Chlamydomonas reinhardtii (Chlamydomonas smithii).